We begin with the raw amino-acid sequence, 366 residues long: Left-right determination factor 1 (366 aa).

A signal peptide spans Met1–Ala21. A propeptide spans Leu22–Lys76 (or 135). Asn158 carries N-linked (GlcNAc...) asparagine glycosylation. Intrachain disulfides connect Cys251–Cys264, Cys263–Cys316, Cys293–Cys351, and Cys297–Cys353.

It belongs to the TGF-beta family. The processing of the protein may also occur at the second R-X-X-R site located at AA 132-135. Processing appears to be regulated in a cell-type specific manner.

The protein localises to the secreted. Functionally, required for left-right axis determination as a regulator of LEFTY2 and NODAL. This Homo sapiens (Human) protein is Left-right determination factor 1 (LEFTY1).